The sequence spans 340 residues: Phenylalanine--tRNA ligase alpha subunit (340 aa).

Residue Glu255 coordinates Mg(2+).

The protein belongs to the class-II aminoacyl-tRNA synthetase family. Phe-tRNA synthetase alpha subunit type 1 subfamily. Tetramer of two alpha and two beta subunits. Mg(2+) serves as cofactor.

It is found in the cytoplasm. It carries out the reaction tRNA(Phe) + L-phenylalanine + ATP = L-phenylalanyl-tRNA(Phe) + AMP + diphosphate + H(+). The sequence is that of Phenylalanine--tRNA ligase alpha subunit from Exiguobacterium sibiricum (strain DSM 17290 / CCUG 55495 / CIP 109462 / JCM 13490 / 255-15).